The chain runs to 249 residues: Homeobox protein TGIF2LX (249 aa).

2 disordered regions span residues 1-62 (MEAA…KRKG) and 126-192 (DPIV…KLTV). Residues 9-27 (AETRSRVEKDSRRAKKDSP) show a composition bias toward basic and acidic residues. Polar residues predominate over residues 28–46 (AKTQSPAQDTSIMLRNNAD). A DNA-binding region (homeobox; TALE-type) is located at residues 55-118 (EHKKKRKGYL…INARRRILPD (64 aa)). Over residues 159 to 172 (DNVQSLPLRSSPKG) the composition is skewed to polar residues.

The protein belongs to the TALE/TGIF homeobox family.

Its subcellular location is the nucleus. Its function is as follows. May have a transcription role in testis. This is Homeobox protein TGIF2LX (TGIF2LX) from Macaca fascicularis (Crab-eating macaque).